The primary structure comprises 271 residues: Mannosyl-3-phosphoglycerate phosphatase (271 aa).

D13 acts as the Nucleophile in catalysis. Mg(2+) is bound by residues D13, D15, and D214.

The protein belongs to the HAD-like hydrolase superfamily. MPGP family. It depends on Mg(2+) as a cofactor.

Its subcellular location is the cytoplasm. The enzyme catalyses 2-O-(alpha-D-mannosyl)-3-phosphoglycerate + H2O = (2R)-2-O-(alpha-D-mannosyl)-glycerate + phosphate. The chain is Mannosyl-3-phosphoglycerate phosphatase from Escherichia coli O127:H6 (strain E2348/69 / EPEC).